A 157-amino-acid polypeptide reads, in one-letter code: Lipoprotein signal peptidase (157 aa).

The next 3 helical transmembrane spans lie at 10-30, 58-78, and 84-104; these read LVFM…KYAI, FLEG…FIFL, and LFKN…SNVL. Active-site residues include aspartate 114 and aspartate 131. A helical transmembrane segment spans residues 122–142; sequence FDFAIFNFADVMIDVGVGVLL.

This sequence belongs to the peptidase A8 family.

It localises to the cell inner membrane. It carries out the reaction Release of signal peptides from bacterial membrane prolipoproteins. Hydrolyzes -Xaa-Yaa-Zaa-|-(S,diacylglyceryl)Cys-, in which Xaa is hydrophobic (preferably Leu), and Yaa (Ala or Ser) and Zaa (Gly or Ala) have small, neutral side chains.. It participates in protein modification; lipoprotein biosynthesis (signal peptide cleavage). Its function is as follows. This protein specifically catalyzes the removal of signal peptides from prolipoproteins. This Helicobacter pylori (strain ATCC 700392 / 26695) (Campylobacter pylori) protein is Lipoprotein signal peptidase.